A 442-amino-acid polypeptide reads, in one-letter code: Glutamate-1-semialdehyde 2,1-aminomutase (442 aa).

Position 282 is an N6-(pyridoxal phosphate)lysine (K282).

This sequence belongs to the class-III pyridoxal-phosphate-dependent aminotransferase family. HemL subfamily. In terms of assembly, homodimer. It depends on pyridoxal 5'-phosphate as a cofactor.

It localises to the cytoplasm. The enzyme catalyses (S)-4-amino-5-oxopentanoate = 5-aminolevulinate. Its pathway is porphyrin-containing compound metabolism; protoporphyrin-IX biosynthesis; 5-aminolevulinate from L-glutamyl-tRNA(Glu): step 2/2. The sequence is that of Glutamate-1-semialdehyde 2,1-aminomutase from Polaromonas sp. (strain JS666 / ATCC BAA-500).